A 129-amino-acid polypeptide reads, in one-letter code: UPF0225 protein XOO0258 (129 aa).

Belongs to the UPF0225 family.

The chain is UPF0225 protein XOO0258 from Xanthomonas oryzae pv. oryzae (strain MAFF 311018).